The chain runs to 502 residues: Glycerol kinase (502 aa).

Position 14 (Thr14) interacts with ADP. Thr14, Thr15, and Ser16 together coordinate ATP. Thr14 contributes to the sn-glycerol 3-phosphate binding site. Arg18 provides a ligand contact to ADP. Positions 84, 85, 136, and 246 each coordinate sn-glycerol 3-phosphate. Glycerol-binding residues include Arg84, Glu85, Tyr136, Asp246, and Gln247. ADP is bound by residues Thr268 and Gly311. ATP-binding residues include Thr268, Gly311, Gln315, and Gly412. ADP-binding residues include Gly412 and Asn416.

It belongs to the FGGY kinase family. Homotetramer and homodimer (in equilibrium). Heterodimer with EIIA-Glc. Binds 1 zinc ion per glycerol kinase EIIA-Glc dimer. The zinc ion is important for dimerization.

It carries out the reaction glycerol + ATP = sn-glycerol 3-phosphate + ADP + H(+). Its pathway is polyol metabolism; glycerol degradation via glycerol kinase pathway; sn-glycerol 3-phosphate from glycerol: step 1/1. Activity of this regulatory enzyme is affected by several metabolites. Allosterically and non-competitively inhibited by fructose 1,6-bisphosphate (FBP) and unphosphorylated phosphocarrier protein EIIA-Glc (III-Glc), an integral component of the bacterial phosphotransferase (PTS) system. Its function is as follows. Key enzyme in the regulation of glycerol uptake and metabolism. Catalyzes the phosphorylation of glycerol to yield sn-glycerol 3-phosphate. The protein is Glycerol kinase of Escherichia coli O127:H6 (strain E2348/69 / EPEC).